The primary structure comprises 309 residues: Glutaminase (309 aa).

Substrate is bound by residues Ser64, Asn114, Glu160, Asn167, Tyr191, Tyr243, and Val261.

Belongs to the glutaminase family. Homotetramer.

The catalysed reaction is L-glutamine + H2O = L-glutamate + NH4(+). The polypeptide is Glutaminase (Methylobacterium nodulans (strain LMG 21967 / CNCM I-2342 / ORS 2060)).